Here is a 402-residue protein sequence, read N- to C-terminus: AA9 family lytic polysaccharide monooxygenase E (402 aa).

The N-terminal stretch at 1 to 16 is a signal peptide; the sequence is MSRLVSFASLLAAVNA. His-17 lines the Cu(2+) pocket. 2 cysteine pairs are disulfide-bonded: Cys-72-Cys-194 and Cys-113-Cys-117. The N-linked (GlcNAc...) asparagine glycan is linked to Asn-75. Residue His-102 coordinates Cu(2+). N-linked (GlcNAc...) asparagine glycosylation is present at Asn-154. Residues His-180 and Gln-189 each contribute to the O2 site. Cu(2+) is bound at residue Tyr-191. Residues 364 to 400 form the CBM1 domain; the sequence is GSNPLYAQCGGLNFKGASGCVAGATCKKMNPYYSQCV.

It belongs to the polysaccharide monooxygenase AA9 family. Cu(2+) is required as a cofactor.

The protein localises to the secreted. It catalyses the reaction [(1-&gt;4)-beta-D-glucosyl]n+m + reduced acceptor + O2 = 4-dehydro-beta-D-glucosyl-[(1-&gt;4)-beta-D-glucosyl]n-1 + [(1-&gt;4)-beta-D-glucosyl]m + acceptor + H2O.. In terms of biological role, lytic polysaccharide monooxygenase (LPMO) that depolymerizes crystalline and amorphous polysaccharides via the oxidation of scissile alpha- or beta-(1-4)-glycosidic bonds, yielding C1 or C4 oxidation products. Catalysis by LPMOs requires the reduction of the active-site copper from Cu(II) to Cu(I) by a reducing agent and H(2)O(2) or O(2) as a cosubstrate. This is AA9 family lytic polysaccharide monooxygenase E from Emericella nidulans (strain FGSC A4 / ATCC 38163 / CBS 112.46 / NRRL 194 / M139) (Aspergillus nidulans).